Reading from the N-terminus, the 263-residue chain is 3-methyl-2-oxobutanoate hydroxymethyltransferase (263 aa).

2 residues coordinate Mg(2+): Asp44 and Asp83. Residues 44–45 (DS), Asp83, and Lys112 contribute to the 3-methyl-2-oxobutanoate site. Mg(2+) is bound at residue Glu114. Residue Glu181 is the Proton acceptor of the active site.

It belongs to the PanB family. In terms of assembly, homodecamer; pentamer of dimers. The cofactor is Mg(2+).

Its subcellular location is the cytoplasm. The catalysed reaction is 3-methyl-2-oxobutanoate + (6R)-5,10-methylene-5,6,7,8-tetrahydrofolate + H2O = 2-dehydropantoate + (6S)-5,6,7,8-tetrahydrofolate. It functions in the pathway cofactor biosynthesis; (R)-pantothenate biosynthesis; (R)-pantoate from 3-methyl-2-oxobutanoate: step 1/2. Its function is as follows. Catalyzes the reversible reaction in which hydroxymethyl group from 5,10-methylenetetrahydrofolate is transferred onto alpha-ketoisovalerate to form ketopantoate. The polypeptide is 3-methyl-2-oxobutanoate hydroxymethyltransferase (Nitrosospira multiformis (strain ATCC 25196 / NCIMB 11849 / C 71)).